Consider the following 907-residue polypeptide: Cytochrome b561, DM13 and DOMON domain-containing protein At5g54830 (907 aa).

The N-terminal stretch at 1–24 is a signal peptide; that stretch reads MCDQRPNLLGSLVLLGFFIFFVNG. Residues 31–139 enclose the DM13 domain; sequence SSLIGHESEF…ASDFGHVLLS (109 aa). The interval 144-172 is disordered; it reads SDTSKAESPPSESNDVAPGKSNNSEPFKA. The span at 153-168 shows a compositional bias: polar residues; sequence PSESNDVAPGKSNNSE. DOMON domains follow at residues 184 to 329 and 524 to 645; these read DKYR…WALG and QQVK…WAMG. Positions 653 to 850 constitute a Cytochrome b561 domain; that stretch reads LTERNMHSVT…CVVTVAYLEY (198 aa). Residues 685–705 traverse the membrane as a helical segment; the sequence is VLGVHGFMMFLAWGILLPGGI. Residues His689 and His723 each contribute to the heme b site. 4 helical membrane-spanning segments follow: residues 730–750, 754–774, 795–815, and 829–849; these read GLAI…GFSF, HVKF…NAWL, SHSI…FTGM, and GLNL…AYLE. Positions 754 and 796 each coordinate heme b. Positions 884-897 are enriched in basic and acidic residues; sequence GGFRDKDDEDRNGG. The segment at 884–907 is disordered; it reads GGFRDKDDEDRNGGRMEIQLEPLK.

Requires heme b as cofactor.

Its subcellular location is the membrane. Its function is as follows. May act as a catecholamine-responsive trans-membrane electron transporter. The protein is Cytochrome b561, DM13 and DOMON domain-containing protein At5g54830 of Arabidopsis thaliana (Mouse-ear cress).